Here is a 591-residue protein sequence, read N- to C-terminus: L-fucose isomerase (591 aa).

Residues Glu-337 and Asp-361 each act as proton acceptor in the active site. Mn(2+) contacts are provided by Glu-337, Asp-361, and His-528.

Belongs to the L-fucose isomerase family. Homohexamer. Mn(2+) is required as a cofactor.

The protein localises to the cytoplasm. The enzyme catalyses L-fucose = L-fuculose. It participates in carbohydrate degradation; L-fucose degradation; L-lactaldehyde and glycerone phosphate from L-fucose: step 1/3. Its function is as follows. Converts the aldose L-fucose into the corresponding ketose L-fuculose. The polypeptide is L-fucose isomerase (Escherichia coli (strain SMS-3-5 / SECEC)).